Consider the following 49-residue polypeptide: MAVKKAALACTVCGSRNYSIAASKNRTQRLELKKFCKHCGKQTLHKETR.

Belongs to the bacterial ribosomal protein bL33 family.

The chain is Large ribosomal subunit protein bL33A from Lactobacillus johnsonii (strain CNCM I-12250 / La1 / NCC 533).